Reading from the N-terminus, the 210-residue chain is Uracil phosphoribosyltransferase (210 aa).

Residues arginine 78, arginine 103, and 130–138 contribute to the 5-phospho-alpha-D-ribose 1-diphosphate site; that span reads DPMLATGGS. Residues isoleucine 193 and 198–200 contribute to the uracil site; that span reads GDA. Aspartate 199 contacts 5-phospho-alpha-D-ribose 1-diphosphate.

Belongs to the UPRTase family. Requires Mg(2+) as cofactor.

The catalysed reaction is UMP + diphosphate = 5-phospho-alpha-D-ribose 1-diphosphate + uracil. It functions in the pathway pyrimidine metabolism; UMP biosynthesis via salvage pathway; UMP from uracil: step 1/1. With respect to regulation, allosterically activated by GTP. Catalyzes the conversion of uracil and 5-phospho-alpha-D-ribose 1-diphosphate (PRPP) to UMP and diphosphate. The chain is Uracil phosphoribosyltransferase from Salinibacter ruber (strain DSM 13855 / M31).